The chain runs to 338 residues: tRNA N6-adenosine threonylcarbamoyltransferase (338 aa).

Residues His110 and His114 each coordinate Fe cation. Substrate is bound by residues 132–136, Asp165, Gly178, and Asn274; that span reads ILSGG. A Fe cation-binding site is contributed by Asp298.

It belongs to the KAE1 / TsaD family. Requires Fe(2+) as cofactor.

The protein localises to the cytoplasm. It carries out the reaction L-threonylcarbamoyladenylate + adenosine(37) in tRNA = N(6)-L-threonylcarbamoyladenosine(37) in tRNA + AMP + H(+). Functionally, required for the formation of a threonylcarbamoyl group on adenosine at position 37 (t(6)A37) in tRNAs that read codons beginning with adenine. Is involved in the transfer of the threonylcarbamoyl moiety of threonylcarbamoyl-AMP (TC-AMP) to the N6 group of A37, together with TsaE and TsaB. TsaD likely plays a direct catalytic role in this reaction. The sequence is that of tRNA N6-adenosine threonylcarbamoyltransferase from Borrelia hermsii (strain HS1 / DAH).